Here is a 304-residue protein sequence, read N- to C-terminus: MAKIIVIKGTSGTGKGTRVVQFIEWLRTKLKPTELSYTVGDKTRPFGLKFEELKLIFVGQYTVSNKSGLASWTSMDAIHAATGSGDIARDLVKGWLAQGYTLVCEGEPLMLSDKWRPEWMFKNYPIDSLALLYFAYPDRYQYDARIRGRSGKEAGDSGWSRNESYSKEFEKSKAEMLALGWNVAVDDYSGQDVLYHQTATNTQEFKTGNDSELAMLPFDAPLWVVGNAIYHQLGTVCRANNLMSKDFYGYCETNPMTREVGGQDPLAHRVPEKPQKASKTKNKAVAKEEPKTSSVSLLGLMRKA.

Residues 260–304 (VGGQDPLAHRVPEKPQKASKTKNKAVAKEEPKTSSVSLLGLMRKA) are disordered. The segment covering 266–275 (LAHRVPEKPQ) has biased composition (basic and acidic residues).

This sequence belongs to the thymidylate kinase family. 5-hmdU DNA kinase subfamily.

It carries out the reaction 5-hydroxymethyl-dUMP in DNA + ATP = 5-phosphomethyl-dUMP in DNA + ADP + H(+). Functionally, phosphorylates 5-hydroxymethyluracil (5hmdU) into 5-phosphomethyl-2'-deoxyuridine (5- PmdU) on DNA as a step in the pathway leading to thymidine hypermodifications in the viral genome. The phosphate is added internally to the DNA polymer. As a final result of the pathway of hypermodification, 5-aminoethoxy-2'-deoxymethyluridine (5-NeOmdU) substitutes for about 40% of the thymidines in the viral DNA. These modifications probably prevent degradation of viral genome by the host restriction-modification antiviral defense system. The sequence is that of 5-hmdU DNA kinase 2 from Salmonella typhi.